We begin with the raw amino-acid sequence, 765 residues long: Eukaryotic translation initiation factor 3 subunit B (765 aa).

The interval 1 to 136 (MKNFLPRTLK…LFVECGSMND (136 aa)) is sufficient for interaction with HCR1 and TIF32. A sufficient for interaction with PIC8 region spans residues 28–261 (RNTQLKRSKI…GVTAWGGPNF (234 aa)). Residue serine 61 is modified to Phosphoserine. The residue at position 67 (tyrosine 67) is a Phosphotyrosine. The RRM domain maps to 77 to 162 (QYIVVNGAPV…HRLFLYTMKD (86 aa)). The residue at position 671 (serine 671) is a Phosphoserine.

It belongs to the eIF-3 subunit B family. Component of the eukaryotic translation initiation factor 3 (eIF-3) complex.

The protein localises to the cytoplasm. RNA-binding component of the eukaryotic translation initiation factor 3 (eIF-3) complex, which is involved in protein synthesis of a specialized repertoire of mRNAs and, together with other initiation factors, stimulates binding of mRNA and methionyl-tRNAi to the 40S ribosome. The eIF-3 complex specifically targets and initiates translation of a subset of mRNAs involved in cell proliferation. This Saccharomyces cerevisiae (strain YJM789) (Baker's yeast) protein is Eukaryotic translation initiation factor 3 subunit B.